Consider the following 359-residue polypeptide: Histidinol-phosphate aminotransferase (359 aa).

Lysine 217 carries the post-translational modification N6-(pyridoxal phosphate)lysine.

Belongs to the class-II pyridoxal-phosphate-dependent aminotransferase family. Histidinol-phosphate aminotransferase subfamily. In terms of assembly, homodimer. Pyridoxal 5'-phosphate is required as a cofactor.

It carries out the reaction L-histidinol phosphate + 2-oxoglutarate = 3-(imidazol-4-yl)-2-oxopropyl phosphate + L-glutamate. Its pathway is amino-acid biosynthesis; L-histidine biosynthesis; L-histidine from 5-phospho-alpha-D-ribose 1-diphosphate: step 7/9. The polypeptide is Histidinol-phosphate aminotransferase (Salmonella arizonae (strain ATCC BAA-731 / CDC346-86 / RSK2980)).